The following is a 184-amino-acid chain: Ribosome-recycling factor (184 aa).

The segment at 141 to 161 (KKNDKAISEDDQRKGQDDVQK) is disordered.

Belongs to the RRF family.

Its subcellular location is the cytoplasm. Functionally, responsible for the release of ribosomes from messenger RNA at the termination of protein biosynthesis. May increase the efficiency of translation by recycling ribosomes from one round of translation to another. The polypeptide is Ribosome-recycling factor (Solidesulfovibrio magneticus (strain ATCC 700980 / DSM 13731 / RS-1) (Desulfovibrio magneticus)).